The following is a 363-amino-acid chain: UDP-N-acetylglucosamine--N-acetylmuramyl-(pentapeptide) pyrophosphoryl-undecaprenol N-acetylglucosamine transferase (363 aa).

UDP-N-acetyl-alpha-D-glucosamine contacts are provided by residues threonine 10–glycine 12, asparagine 124, serine 195, isoleucine 250, and glutamine 295.

Belongs to the glycosyltransferase 28 family. MurG subfamily.

The protein resides in the cell membrane. The catalysed reaction is di-trans,octa-cis-undecaprenyl diphospho-N-acetyl-alpha-D-muramoyl-L-alanyl-D-glutamyl-meso-2,6-diaminopimeloyl-D-alanyl-D-alanine + UDP-N-acetyl-alpha-D-glucosamine = di-trans,octa-cis-undecaprenyl diphospho-[N-acetyl-alpha-D-glucosaminyl-(1-&gt;4)]-N-acetyl-alpha-D-muramoyl-L-alanyl-D-glutamyl-meso-2,6-diaminopimeloyl-D-alanyl-D-alanine + UDP + H(+). Its pathway is cell wall biogenesis; peptidoglycan biosynthesis. Functionally, cell wall formation. Catalyzes the transfer of a GlcNAc subunit on undecaprenyl-pyrophosphoryl-MurNAc-pentapeptide (lipid intermediate I) to form undecaprenyl-pyrophosphoryl-MurNAc-(pentapeptide)GlcNAc (lipid intermediate II). This Listeria welshimeri serovar 6b (strain ATCC 35897 / DSM 20650 / CCUG 15529 / CIP 8149 / NCTC 11857 / SLCC 5334 / V8) protein is UDP-N-acetylglucosamine--N-acetylmuramyl-(pentapeptide) pyrophosphoryl-undecaprenol N-acetylglucosamine transferase.